The chain runs to 171 residues: uncharacterized protein (171 aa).

In terms of biological role, required for production of the bacteriocin SkfA. This is an uncharacterized protein from Bacillus subtilis (strain 168).